The chain runs to 258 residues: PF03932 family protein CutC (258 aa).

The protein belongs to the CutC family.

The protein resides in the cytoplasm. This Mesorhizobium japonicum (strain LMG 29417 / CECT 9101 / MAFF 303099) (Mesorhizobium loti (strain MAFF 303099)) protein is PF03932 family protein CutC.